We begin with the raw amino-acid sequence, 263 residues long: uncharacterized protein (263 aa).

An N-terminal signal peptide occupies residues 1–22; the sequence is MGYLKRLVLYIVIMVMSVFIIG. Cys23 is lipidated: N-palmitoyl cysteine. Cys23 carries S-diacylglycerol cysteine lipidation.

It belongs to the staphylococcal tandem lipoprotein family.

The protein resides in the cell membrane. This is an uncharacterized protein from Staphylococcus aureus (strain N315).